A 133-amino-acid polypeptide reads, in one-letter code: Fatty acid-binding protein homolog 1 (133 aa).

Methionine 1 carries the post-translational modification N-acetylmethionine. Residues arginine 107 and arginine 127–tyrosine 129 each bind hexadecanoate.

Belongs to the calycin superfamily. Fatty-acid binding protein (FABP) family.

In terms of biological role, has been implicated in the acquisition, storage, and transport of lipids, and may be important to the organism since it is incapable of synthesizing most of its lipids de novo. This chain is Fatty acid-binding protein homolog 1 (FABP1), found in Echinococcus granulosus (Hydatid tapeworm).